The primary structure comprises 547 residues: Phosphomethylpyrimidine synthase (547 aa).

Residues 1-15 are compositionally biased toward polar residues; sequence MTETLSKTTEPSVTT. Residues 1–36 form a disordered region; it reads MTETLSKTTEPSVTTGPIPGSSKAYREVANPDGGPS. Substrate is bound by residues Asn-150, Met-179, Tyr-208, His-244, 264–266, 305–308, and Glu-344; these read SRG and DGLR. His-348 provides a ligand contact to Zn(2+). A substrate-binding site is contributed by Tyr-371. Residue His-412 coordinates Zn(2+). Cys-492, Cys-495, and Cys-500 together coordinate [4Fe-4S] cluster.

The protein belongs to the ThiC family. It depends on [4Fe-4S] cluster as a cofactor.

The catalysed reaction is 5-amino-1-(5-phospho-beta-D-ribosyl)imidazole + S-adenosyl-L-methionine = 4-amino-2-methyl-5-(phosphooxymethyl)pyrimidine + CO + 5'-deoxyadenosine + formate + L-methionine + 3 H(+). It functions in the pathway cofactor biosynthesis; thiamine diphosphate biosynthesis. In terms of biological role, catalyzes the synthesis of the hydroxymethylpyrimidine phosphate (HMP-P) moiety of thiamine from aminoimidazole ribotide (AIR) in a radical S-adenosyl-L-methionine (SAM)-dependent reaction. The polypeptide is Phosphomethylpyrimidine synthase (Mycobacterium leprae (strain Br4923)).